The following is a 339-amino-acid chain: Geranylgeranyl pyrophosphate synthase AN1592 (339 aa).

Residues Lys-41, Arg-44, and His-73 each coordinate isopentenyl diphosphate. Asp-80 and Asp-84 together coordinate Mg(2+). Arg-89 lines the dimethylallyl diphosphate pocket. Arg-90 contributes to the isopentenyl diphosphate binding site. 3 residues coordinate dimethylallyl diphosphate: Lys-192, Thr-193, and Gln-228. A Mg(2+)-binding site is contributed by Asp-231. Dimethylallyl diphosphate contacts are provided by Asn-235, Lys-245, and Lys-255.

Belongs to the FPP/GGPP synthase family. Mg(2+) serves as cofactor.

The enzyme catalyses isopentenyl diphosphate + dimethylallyl diphosphate = (2E)-geranyl diphosphate + diphosphate. The catalysed reaction is isopentenyl diphosphate + (2E)-geranyl diphosphate = (2E,6E)-farnesyl diphosphate + diphosphate. It catalyses the reaction isopentenyl diphosphate + (2E,6E)-farnesyl diphosphate = (2E,6E,10E)-geranylgeranyl diphosphate + diphosphate. It functions in the pathway secondary metabolite biosynthesis. Geranylgeranyl pyrophosphate synthase; part of the gene cluster that mediates the biosynthesis of erinacines, cyathane-xylosides that show unique biological activities, including leishmanicidal activity, stimulating activity for nerve growth-factor synthesis, and agonistic activity toward the kappa opioid receptor. The geranylgeranyl diphosphate (GGPP) synthase eriE catalyzes the first step in erinacines biosynthesis via conversion of farnesyl pyrophosphate and isopentyl pyrophosphate into geranylgeranyl pyrophosphate (GGPP). GGPP is then substrate of the diterpene cyclase eriG for the production of cyatha-3,12-diene. The cytochrome P450 monooxygenase eriI then hydroxylates cyatha-3,12-diene at C-14 of the seven-membered ring to produce erinacol, which is further hydroxylated at C-15 by the cytochrome P450 monooxygenase eriC to yield cyathadiol. The cytochrome P450 monooxygenase eriA then catalyzes C-11 hydroxylation in the presence of the short chain dehydrogenase/reductase (SDR) eriH, which leads to the production of cyathatriol. The acetyltransferase eriL converts cyathatriol into 11-O-acetyl-cyathatriol. The SDR eriH catalyzes further oxidation of 11-O-acetyl-cyathatriol into 1-O-acetylcyathin A3. Finally, the glycosyl transferase eriJ tranfers xylose from UDP-xylose onto C-14 of 11-O-acetyl-cyathatriol to form eracine Q. EriJ is also able to convert 11-O-acetyl-cyathatriol to eracine Q2 by using UDP-D-glucose as cosubstrate, but at a lower rate. In the absence of eriL and eriJ, the SDR eriH is able to convert cyathatriol to cyathin A3; this is likely a switching mechanism in the biosynthesis of cyathins (C-14 ketogroup)and erinacines (C-14 glycosylated group). The roles of the SDR eriB, the polyprenyl transferase eriF and the dehydrogenase eriK have still to be identified. In Hericium erinaceus (Lion's mane mushroom), this protein is Geranylgeranyl pyrophosphate synthase AN1592.